We begin with the raw amino-acid sequence, 92 residues long: Small ribosomal subunit protein uS19 (92 aa).

The protein belongs to the universal ribosomal protein uS19 family.

Functionally, protein S19 forms a complex with S13 that binds strongly to the 16S ribosomal RNA. The chain is Small ribosomal subunit protein uS19 from Treponema denticola (strain ATCC 35405 / DSM 14222 / CIP 103919 / JCM 8153 / KCTC 15104).